We begin with the raw amino-acid sequence, 395 residues long: Lipid-A-disaccharide synthase (395 aa).

The protein belongs to the LpxB family.

The catalysed reaction is a lipid X + a UDP-2-N,3-O-bis[(3R)-3-hydroxyacyl]-alpha-D-glucosamine = a lipid A disaccharide + UDP + H(+). It participates in bacterial outer membrane biogenesis; LPS lipid A biosynthesis. In terms of biological role, condensation of UDP-2,3-diacylglucosamine and 2,3-diacylglucosamine-1-phosphate to form lipid A disaccharide, a precursor of lipid A, a phosphorylated glycolipid that anchors the lipopolysaccharide to the outer membrane of the cell. The sequence is that of Lipid-A-disaccharide synthase from Bordetella avium (strain 197N).